Here is a 279-residue protein sequence, read N- to C-terminus: Energy-coupling factor transporter ATP-binding protein EcfA1 (279 aa).

In terms of domain architecture, ABC transporter spans 5-240; that stretch reads ITVNNLFFKY…GNRLISLGLD (236 aa). 40–47 contacts ATP; that stretch reads GHNGSGKS.

This sequence belongs to the ABC transporter superfamily. Energy-coupling factor EcfA family. In terms of assembly, forms a stable energy-coupling factor (ECF) transporter complex composed of 2 membrane-embedded substrate-binding proteins (S component), 2 ATP-binding proteins (A component) and 2 transmembrane proteins (T component).

It is found in the cell membrane. In terms of biological role, ATP-binding (A) component of a common energy-coupling factor (ECF) ABC-transporter complex. Unlike classic ABC transporters this ECF transporter provides the energy necessary to transport a number of different substrates. This chain is Energy-coupling factor transporter ATP-binding protein EcfA1, found in Streptococcus agalactiae serotype Ia (strain ATCC 27591 / A909 / CDC SS700).